A 57-amino-acid polypeptide reads, in one-letter code: Small ribosomal subunit protein bS21 (57 aa).

A disordered region spans residues 35-57 (RERYEKPSLRRKRKQEAARKRNR).

This sequence belongs to the bacterial ribosomal protein bS21 family.

This Thermosynechococcus vestitus (strain NIES-2133 / IAM M-273 / BP-1) protein is Small ribosomal subunit protein bS21.